Here is a 228-residue protein sequence, read N- to C-terminus: N-acetyltransferase family 8 member 3 (228 aa).

2 helical membrane passes run 36-56 and 58-78; these read MLLL…LFLA and GSWL…WLLA. The N-acetyltransferase domain maps to 61–217; sequence LLVLLSTLTL…RNSPMICLKY (157 aa).

Belongs to the camello family.

The protein localises to the nucleus membrane. It localises to the cytoplasm. It is found in the perinuclear region. It carries out the reaction L-lysyl-[protein] + acetyl-CoA = N(6)-acetyl-L-lysyl-[protein] + CoA + H(+). Has histone acetyltransferase activity in vitro, with specificity for histone H4. The sequence is that of N-acetyltransferase family 8 member 3 from Rattus norvegicus (Rat).